A 631-amino-acid polypeptide reads, in one-letter code: Phosphomethylpyrimidine synthase (631 aa).

Residues asparagine 239, methionine 268, tyrosine 297, histidine 333, 353-355, 394-397, and glutamate 433 contribute to the substrate site; these read SRG and DGLR. Histidine 437 is a Zn(2+) binding site. Residue tyrosine 460 coordinates substrate. Histidine 501 is a binding site for Zn(2+). [4Fe-4S] cluster-binding residues include cysteine 581, cysteine 584, and cysteine 589.

The protein belongs to the ThiC family. As to quaternary structure, homodimer. [4Fe-4S] cluster serves as cofactor.

It catalyses the reaction 5-amino-1-(5-phospho-beta-D-ribosyl)imidazole + S-adenosyl-L-methionine = 4-amino-2-methyl-5-(phosphooxymethyl)pyrimidine + CO + 5'-deoxyadenosine + formate + L-methionine + 3 H(+). Its pathway is cofactor biosynthesis; thiamine diphosphate biosynthesis. Catalyzes the synthesis of the hydroxymethylpyrimidine phosphate (HMP-P) moiety of thiamine from aminoimidazole ribotide (AIR) in a radical S-adenosyl-L-methionine (SAM)-dependent reaction. The sequence is that of Phosphomethylpyrimidine synthase from Ralstonia nicotianae (strain ATCC BAA-1114 / GMI1000) (Ralstonia solanacearum).